A 245-amino-acid polypeptide reads, in one-letter code: Uridylate kinase (245 aa).

13–16 (KLSG) contributes to the ATP binding site. A UMP-binding site is contributed by G56. The ATP site is built by G57 and R61. UMP-binding positions include D76 and 138 to 145 (TGRPFFTT). Positions 166, 172, and 175 each coordinate ATP.

Belongs to the UMP kinase family. As to quaternary structure, homohexamer.

It is found in the cytoplasm. It catalyses the reaction UMP + ATP = UDP + ADP. It functions in the pathway pyrimidine metabolism; CTP biosynthesis via de novo pathway; UDP from UMP (UMPK route): step 1/1. Inhibited by UTP. Functionally, catalyzes the reversible phosphorylation of UMP to UDP. The polypeptide is Uridylate kinase (Mycoplasma mobile (strain ATCC 43663 / 163K / NCTC 11711) (Mesomycoplasma mobile)).